Reading from the N-terminus, the 690-residue chain is UvrABC system protein B (690 aa).

The 159-residue stretch at 30-188 folds into the Helicase ATP-binding domain; the sequence is QGVMDGQTNQ…QELISLHFVR (159 aa). 43-50 contacts ATP; it reads GVTGSGKT. Positions 96–119 match the Beta-hairpin motif; that stretch reads YYDFYQPEAYIPTMDKYIAKDLKI. The 167-residue stretch at 435–601 folds into the Helicase C-terminal domain; that stretch reads QIDDLLEEIR…SIVKSVDQVL (167 aa). Positions 641-676 constitute a UVR domain; the sequence is YAMAEELRLEMQEAAESMEFEKAAYLRDEVTKLEDA.

Belongs to the UvrB family. In terms of assembly, forms a heterotetramer with UvrA during the search for lesions. Interacts with UvrC in an incision complex.

Its subcellular location is the cytoplasm. Functionally, the UvrABC repair system catalyzes the recognition and processing of DNA lesions. A damage recognition complex composed of 2 UvrA and 2 UvrB subunits scans DNA for abnormalities. Upon binding of the UvrA(2)B(2) complex to a putative damaged site, the DNA wraps around one UvrB monomer. DNA wrap is dependent on ATP binding by UvrB and probably causes local melting of the DNA helix, facilitating insertion of UvrB beta-hairpin between the DNA strands. Then UvrB probes one DNA strand for the presence of a lesion. If a lesion is found the UvrA subunits dissociate and the UvrB-DNA preincision complex is formed. This complex is subsequently bound by UvrC and the second UvrB is released. If no lesion is found, the DNA wraps around the other UvrB subunit that will check the other stand for damage. The chain is UvrABC system protein B from Chlorobium phaeobacteroides (strain BS1).